A 132-amino-acid polypeptide reads, in one-letter code: D-ribose pyranase (132 aa).

His20 functions as the Proton donor in the catalytic mechanism. Substrate-binding positions include Asp28, His99, and 121–123 (YSN).

The protein belongs to the RbsD / FucU family. RbsD subfamily. As to quaternary structure, homodecamer.

The protein resides in the cytoplasm. The catalysed reaction is beta-D-ribopyranose = beta-D-ribofuranose. The protein operates within carbohydrate metabolism; D-ribose degradation; D-ribose 5-phosphate from beta-D-ribopyranose: step 1/2. In terms of biological role, catalyzes the interconversion of beta-pyran and beta-furan forms of D-ribose. This Streptococcus agalactiae serotype Ia (strain ATCC 27591 / A909 / CDC SS700) protein is D-ribose pyranase.